A 96-amino-acid chain; its full sequence is Large ribosomal subunit protein bL27 (96 aa).

Positions 1–9 (MLRLDLQFF) are excised as a propeptide.

This sequence belongs to the bacterial ribosomal protein bL27 family. In terms of processing, the N-terminus is cleaved by ribosomal processing cysteine protease Prp.

The sequence is that of Large ribosomal subunit protein bL27 from Anoxybacillus flavithermus (strain DSM 21510 / WK1).